Reading from the N-terminus, the 213-residue chain is Thymidylate kinase (213 aa).

Residue 11-18 coordinates ATP; sequence GPDGAGKT.

The protein belongs to the thymidylate kinase family.

The enzyme catalyses dTMP + ATP = dTDP + ADP. In terms of biological role, phosphorylation of dTMP to form dTDP in both de novo and salvage pathways of dTTP synthesis. The polypeptide is Thymidylate kinase (Oenococcus oeni (strain ATCC BAA-331 / PSU-1)).